A 320-amino-acid polypeptide reads, in one-letter code: o-succinylbenzoate synthase (320 aa).

Lysine 133 serves as the catalytic Proton donor. Mg(2+)-binding residues include aspartate 161, glutamate 190, and aspartate 213. Lysine 235 acts as the Proton acceptor in catalysis.

It belongs to the mandelate racemase/muconate lactonizing enzyme family. MenC type 1 subfamily. A divalent metal cation is required as a cofactor.

It catalyses the reaction (1R,6R)-6-hydroxy-2-succinyl-cyclohexa-2,4-diene-1-carboxylate = 2-succinylbenzoate + H2O. It functions in the pathway quinol/quinone metabolism; 1,4-dihydroxy-2-naphthoate biosynthesis; 1,4-dihydroxy-2-naphthoate from chorismate: step 4/7. It participates in quinol/quinone metabolism; menaquinone biosynthesis. Functionally, converts 2-succinyl-6-hydroxy-2,4-cyclohexadiene-1-carboxylate (SHCHC) to 2-succinylbenzoate (OSB). The protein is o-succinylbenzoate synthase of Escherichia coli (strain K12 / MC4100 / BW2952).